The chain runs to 200 residues: Recombination protein RecR (200 aa).

A C4-type zinc finger spans residues 60-75 (CVYCQALTEDDVCNIC). Residues 83–177 (TKLCIIESML…KISRIGFGVP (95 aa)) form the Toprim domain.

It belongs to the RecR family.

In terms of biological role, may play a role in DNA repair. It seems to be involved in an RecBC-independent recombinational process of DNA repair. It may act with RecF and RecO. The polypeptide is Recombination protein RecR (Francisella tularensis subsp. mediasiatica (strain FSC147)).